Consider the following 969-residue polypeptide: UvrABC system protein A (969 aa).

32–39 serves as a coordination point for ATP; the sequence is GLSGSGKS. The C4-type zinc-finger motif lies at 258–286; sequence CPNGHPLAVDDLEPRSFSFNSPYGACPEC. ABC transporter domains are found at residues 316–599 and 619–948; these read WSAG…KDSI and VDRK…KFLA. 652-659 contacts ATP; sequence GVSGSGKS. The segment at 751–777 adopts a C4-type zinc-finger fold; that stretch reads CEACTGDGTIKIEMNFLPDVYVPCEVC.

This sequence belongs to the ABC transporter superfamily. UvrA family. As to quaternary structure, forms a heterotetramer with UvrB during the search for lesions.

It localises to the cytoplasm. The UvrABC repair system catalyzes the recognition and processing of DNA lesions. UvrA is an ATPase and a DNA-binding protein. A damage recognition complex composed of 2 UvrA and 2 UvrB subunits scans DNA for abnormalities. When the presence of a lesion has been verified by UvrB, the UvrA molecules dissociate. This chain is UvrABC system protein A, found in Mycobacterium leprae (strain TN).